We begin with the raw amino-acid sequence, 256 residues long: Triosephosphate isomerase (256 aa).

Asn10–Lys12 provides a ligand contact to substrate. The active-site Electrophile is the His97. Glu169 functions as the Proton acceptor in the catalytic mechanism. Residues Gly175, Ser214, and Gly235–Gly236 contribute to the substrate site.

Belongs to the triosephosphate isomerase family. In terms of assembly, homodimer.

The protein resides in the cytoplasm. The catalysed reaction is D-glyceraldehyde 3-phosphate = dihydroxyacetone phosphate. It functions in the pathway carbohydrate biosynthesis; gluconeogenesis. It participates in carbohydrate degradation; glycolysis; D-glyceraldehyde 3-phosphate from glycerone phosphate: step 1/1. In terms of biological role, involved in the gluconeogenesis. Catalyzes stereospecifically the conversion of dihydroxyacetone phosphate (DHAP) to D-glyceraldehyde-3-phosphate (G3P). The sequence is that of Triosephosphate isomerase from Actinobacillus pleuropneumoniae serotype 7 (strain AP76).